The primary structure comprises 425 residues: UPF0597 protein VSAL_I0741 (425 aa).

The protein belongs to the UPF0597 family.

The polypeptide is UPF0597 protein VSAL_I0741 (Aliivibrio salmonicida (strain LFI1238) (Vibrio salmonicida (strain LFI1238))).